The chain runs to 291 residues: MKSGFVSIIGRTNAGKSTLINSLLEEKIALVSHKQNATRRKIKAIVMHEKNQIIFIDTPGLHESGATLNQLLVQSAIKSMGDCDVILFVASVFDSTKDYENFLSLNPQVPHIIALNKVDLTDNATLLKKLSEYAKFSQHFKAIIPYSSKKKSYKKGLLDEIVKYLDEHEYFYNPEFLSASSEKELYRDFILESIYENLSDELPYSSEVLINRTKDTPNLLILEANIITDTNSHKGMLIGKEGATLKRIGKDARFKISKLAQKKVLLKLFVTVKKNWQKDEEFLKKLLNDEN.

Residues 2-167 (KSGFVSIIGR…LDEIVKYLDE (166 aa)) enclose the Era-type G domain. The interval 10 to 17 (GRTNAGKS) is G1. Residue 10-17 (GRTNAGKS) coordinates GTP. Residues 36–40 (NATRR) form a G2 region. The tract at residues 57–60 (DTPG) is G3. Residues 57–61 (DTPGL) and 116–119 (NKVD) each bind GTP. The segment at 116-119 (NKVD) is G4. The segment at 146 to 148 (YSS) is G5. The region spanning 186 to 274 (YRDFILESIY…LLKLFVTVKK (89 aa)) is the KH type-2 domain.

It belongs to the TRAFAC class TrmE-Era-EngA-EngB-Septin-like GTPase superfamily. Era GTPase family. In terms of assembly, monomer.

It is found in the cytoplasm. The protein resides in the cell inner membrane. In terms of biological role, an essential GTPase that binds both GDP and GTP, with rapid nucleotide exchange. Plays a role in 16S rRNA processing and 30S ribosomal subunit biogenesis and possibly also in cell cycle regulation and energy metabolism. The sequence is that of GTPase Era from Campylobacter jejuni (strain RM1221).